Consider the following 49-residue polypeptide: Light-harvesting protein B-875 beta chain (49 aa).

The Cytoplasmic segment spans residues Ala2–Gly27. Residues His21 and His39 each coordinate a bacteriochlorophyll. A helical; Signal-anchor for type II membrane protein transmembrane segment spans residues Leu28 to Trp45. Residues Arg46–Phe49 are Periplasmic-facing.

It belongs to the antenna complex beta subunit family. As to quaternary structure, the core complex is formed by different alpha and beta chains, binding bacteriochlorophyll molecules, and arranged most probably in tetrameric structures disposed around the reaction center. The non-pigmented gamma chains may constitute additional components.

The protein resides in the cell inner membrane. Functionally, antenna complexes are light-harvesting systems, which transfer the excitation energy to the reaction centers. The protein is Light-harvesting protein B-875 beta chain (pufB) of Cereibacter sphaeroides (strain ATCC 17023 / DSM 158 / JCM 6121 / CCUG 31486 / LMG 2827 / NBRC 12203 / NCIMB 8253 / ATH 2.4.1.) (Rhodobacter sphaeroides).